Consider the following 270-residue polypeptide: Putative methylsterol monooxygenase DDB_G0269788 (270 aa).

The next 3 helical transmembrane spans lie at 31 to 51 (FIAHEVFYFGSFIPFFLCDFM), 82 to 102 (IFVQLPMMYIFDPAIKAIGLS), and 110 to 130 (IPYLIFTIACCFLIEDFYFYW). The region spanning 118 to 249 (ACCFLIEDFY…FTYLDKIFGT (132 aa)) is the Fatty acid hydroxylase domain. The Histidine box-1 motif lies at 132–136 (HRALH). A Histidine box-2 motif is present at residues 145-149 (HKVHH). The short motif at 224 to 230 (FHDFHHE) is the Histidine box-3 element.

The protein belongs to the sterol desaturase family. It depends on Fe cation as a cofactor.

It localises to the endoplasmic reticulum membrane. The catalysed reaction is 4,4-dimethyl-5alpha-cholest-7-en-3beta-ol + 6 Fe(II)-[cytochrome b5] + 3 O2 + 5 H(+) = 4alpha-carboxy-4beta-methyl-5alpha-cholest-7-ene-3beta-ol + 6 Fe(III)-[cytochrome b5] + 4 H2O. The protein operates within steroid biosynthesis; zymosterol biosynthesis; zymosterol from lanosterol: step 3/6. This is Putative methylsterol monooxygenase DDB_G0269788 from Dictyostelium discoideum (Social amoeba).